The sequence spans 160 residues: MNFNHFDESGNAVMVDVSHKQPTLRTAVAAARVGMSPELLAAIREGGMAKGDVLGVARLAGIMAAKKTPDLIPLSHPLAIHSVAVDYELDSGAGTIQVRCTVRALERTGVEMEAMTGASLAALTIYDMCKGSDKSITIGDIRLLYKEGGKSGVYRREEGQ.

Residues 74–76 and 112–113 each bind substrate; these read LSH and ME. D127 is an active-site residue.

The protein belongs to the MoaC family. In terms of assembly, homohexamer; trimer of dimers.

It carries out the reaction (8S)-3',8-cyclo-7,8-dihydroguanosine 5'-triphosphate = cyclic pyranopterin phosphate + diphosphate. Its pathway is cofactor biosynthesis; molybdopterin biosynthesis. In terms of biological role, catalyzes the conversion of (8S)-3',8-cyclo-7,8-dihydroguanosine 5'-triphosphate to cyclic pyranopterin monophosphate (cPMP). The sequence is that of Cyclic pyranopterin monophosphate synthase from Pelobacter propionicus (strain DSM 2379 / NBRC 103807 / OttBd1).